The sequence spans 138 residues: Basic phospholipase A2 Drk-b1 (138 aa).

Residues 1–16 (MRTLWIVAMCLIGVEG) form the signal peptide. 7 disulfides stabilise this stretch: cysteine 42–cysteine 131, cysteine 44–cysteine 60, cysteine 59–cysteine 111, cysteine 65–cysteine 138, cysteine 66–cysteine 104, cysteine 73–cysteine 97, and cysteine 91–cysteine 102. Ca(2+) contacts are provided by tyrosine 43, glycine 45, and glycine 47. Residue histidine 63 is part of the active site. Residue aspartate 64 coordinates Ca(2+). Aspartate 105 is a catalytic residue.

The cofactor is Ca(2+). Expressed by the venom gland.

It is found in the secreted. It carries out the reaction a 1,2-diacyl-sn-glycero-3-phosphocholine + H2O = a 1-acyl-sn-glycero-3-phosphocholine + a fatty acid + H(+). In terms of biological role, exhibits high hydrolytic activities and shows strong preference for the anionic micelles (dPPC with deoxycholate) to the zwitterionic micelles (dPPC with Triton X-100). PLA2 catalyzes the calcium-dependent hydrolysis of the 2-acyl groups in 3-sn-phosphoglycerides. The sequence is that of Basic phospholipase A2 Drk-b1 from Daboia russelii (Russel's viper).